We begin with the raw amino-acid sequence, 150 residues long: Ribonuclease K6 (150 aa).

An N-terminal signal peptide occupies residues 1–23; it reads MVLCFPLLLLLLVLWGPVCLLHA. The active-site Proton acceptor is the His-38. Disulfide bonds link Cys-46–Cys-104, Cys-60–Cys-114, Cys-78–Cys-129, and Cys-85–Cys-92. Residue Asn-55 is glycosylated (N-linked (GlcNAc...) asparagine). Substrate-binding positions include 61 to 65 and Lys-86; that span reads KHQNT. Asn-100 carries an N-linked (GlcNAc...) asparagine glycan. Substrate is bound at residue Arg-105. Residue His-145 is the Proton donor of the active site.

This sequence belongs to the pancreatic ribonuclease family. In terms of assembly, interacts (via N-terminus) with bacterial lipopolysaccharide (LPS).

Its subcellular location is the secreted. It is found in the lysosome. It localises to the cytoplasmic granule. In terms of biological role, ribonuclease which shows a preference for the pyrimidines uridine and cytosine. Has potent antibacterial activity against a range of Gram-positive and Gram-negative bacteria, including P.aeruginosa, A.baumanii, M.luteus, S.aureus, E.faecalis, E.faecium, S.saprophyticus and E.coli. Causes loss of bacterial membrane integrity, and also promotes agglutination of Gram-negative bacteria. Probably contributes to urinary tract sterility. Bactericidal activity is independent of RNase activity. The protein is Ribonuclease K6 (RNASE6) of Chlorocebus aethiops (Green monkey).